A 226-amino-acid chain; its full sequence is Large ribosomal subunit protein uL1 (226 aa).

The protein belongs to the universal ribosomal protein uL1 family. As to quaternary structure, part of the 50S ribosomal subunit.

Functionally, binds directly to 23S rRNA. The L1 stalk is quite mobile in the ribosome, and is involved in E site tRNA release. In terms of biological role, protein L1 is also a translational repressor protein, it controls the translation of the L11 operon by binding to its mRNA. The chain is Large ribosomal subunit protein uL1 from Mycoplasma capricolum subsp. capricolum (strain California kid / ATCC 27343 / NCTC 10154).